Here is a 468-residue protein sequence, read N- to C-terminus: Glutamate--tRNA ligase (468 aa).

Positions 14 to 24 match the 'HIGH' region motif; that stretch reads PSPTGFIHLGN. Residues 246 to 250 carry the 'KMSKS' region motif; that stretch reads KMSKR. Lys-249 is an ATP binding site.

This sequence belongs to the class-I aminoacyl-tRNA synthetase family. Glutamate--tRNA ligase type 1 subfamily. Monomer.

Its subcellular location is the cytoplasm. It carries out the reaction tRNA(Glu) + L-glutamate + ATP = L-glutamyl-tRNA(Glu) + AMP + diphosphate. Functionally, catalyzes the attachment of glutamate to tRNA(Glu) in a two-step reaction: glutamate is first activated by ATP to form Glu-AMP and then transferred to the acceptor end of tRNA(Glu). This chain is Glutamate--tRNA ligase, found in Leptothrix cholodnii (strain ATCC 51168 / LMG 8142 / SP-6) (Leptothrix discophora (strain SP-6)).